A 344-amino-acid polypeptide reads, in one-letter code: Aromatic amino acid aminotransferase (344 aa).

Lys213 is modified (N6-(pyridoxal phosphate)lysine).

This sequence belongs to the class-II pyridoxal-phosphate-dependent aminotransferase family. Homodimer. It depends on pyridoxal 5'-phosphate as a cofactor.

The catalysed reaction is an aromatic L-alpha-amino acid + 2-oxoglutarate = an aromatic oxo-acid + L-glutamate. Its function is as follows. Aminotransferase that catalyzes the conversion of aromatic amino acids and 2-oxoglutarate into corresponding aromatic oxo acids and L-glutamate. This Corynebacterium diphtheriae (strain ATCC 700971 / NCTC 13129 / Biotype gravis) protein is Aromatic amino acid aminotransferase.